Reading from the N-terminus, the 509-residue chain is tRNA-2-methylthio-N(6)-dimethylallyladenosine synthase (509 aa).

The tract at residues 1–20 (MNEKQKQESGQVNPADKTSE) is disordered. In terms of domain architecture, MTTase N-terminal spans 66 to 184 (RKFYIRTYGC…LPELLSEAYL (119 aa)). 6 residues coordinate [4Fe-4S] cluster: C75, C111, C145, C221, C225, and C228. In terms of domain architecture, Radical SAM core spans 207–437 (RNGKIKGWVN…NDLVKEISAK (231 aa)). In terms of domain architecture, TRAM spans 440 to 503 (KEYEGRTVEV…TWSLDGVMAG (64 aa)).

It belongs to the methylthiotransferase family. MiaB subfamily. As to quaternary structure, monomer. Requires [4Fe-4S] cluster as cofactor.

The protein resides in the cytoplasm. The catalysed reaction is N(6)-dimethylallyladenosine(37) in tRNA + (sulfur carrier)-SH + AH2 + 2 S-adenosyl-L-methionine = 2-methylsulfanyl-N(6)-dimethylallyladenosine(37) in tRNA + (sulfur carrier)-H + 5'-deoxyadenosine + L-methionine + A + S-adenosyl-L-homocysteine + 2 H(+). Its function is as follows. Catalyzes the methylthiolation of N6-(dimethylallyl)adenosine (i(6)A), leading to the formation of 2-methylthio-N6-(dimethylallyl)adenosine (ms(2)i(6)A) at position 37 in tRNAs that read codons beginning with uridine. This is tRNA-2-methylthio-N(6)-dimethylallyladenosine synthase from Bacillus velezensis (strain DSM 23117 / BGSC 10A6 / LMG 26770 / FZB42) (Bacillus amyloliquefaciens subsp. plantarum).